The chain runs to 331 residues: XylDLEGF operon transcriptional activator 3 (331 aa).

Residues 214–315 (ERVVQFIEDN…GELPSDTLRR (102 aa)) form the HTH araC/xylS-type domain. DNA-binding regions (H-T-H motif) lie at residues 231–252 (ERLA…EKHA) and 282–305 (VTEM…RSTF).

It is found in the cytoplasm. Its function is as follows. Regulatory protein of the TOL plasmid xyl operons. XylS activates the xylXYZLTEGFJQKIH operon required for the degradation of toluene, m-xylene and p-xylene. This Pseudomonas putida (Arthrobacter siderocapsulatus) protein is XylDLEGF operon transcriptional activator 3 (xylS3).